We begin with the raw amino-acid sequence, 375 residues long: MTCSITELAKKLISIPSVSPKDLGCQDIIIKRLCAIGFDIKRVNVNDTKNFWAFRGTGKTLTFAGHTDVVPIGQDKDWQTDPFQPVIRSGYLFGRGSADMKGALAAMITAAERFVNKFPNHKGRLSFLITSDEESSAVDGTIKIVEYLMSKRDMIDYCIVGEPSSTNIVGDVIKNGRRGSITANITIYGIQGHIAYPDLADNPIHKGLPVILKILSIKLDSGNDFFLPSSINIANIHAGNGFNNVIPGSLFVQFNIRFSSEVSEKHIQSQIVNILNSNDINYSIEWLFSGKPFITKKGLLIDTVIQSIFYFNKKKPILSTSGGTSDGRFIALMGSEVVELGLVNNTIHKVNECVKISDLKLLSCMYEDIMKNLLS.

Residue H66 coordinates Zn(2+). Residue D68 is part of the active site. Residue D99 participates in Zn(2+) binding. E133 functions as the Proton acceptor in the catalytic mechanism. Residues E134, E162, and H348 each contribute to the Zn(2+) site.

This sequence belongs to the peptidase M20A family. DapE subfamily. As to quaternary structure, homodimer. The cofactor is Zn(2+). Co(2+) serves as cofactor.

The catalysed reaction is N-succinyl-(2S,6S)-2,6-diaminopimelate + H2O = (2S,6S)-2,6-diaminopimelate + succinate. The protein operates within amino-acid biosynthesis; L-lysine biosynthesis via DAP pathway; LL-2,6-diaminopimelate from (S)-tetrahydrodipicolinate (succinylase route): step 3/3. Functionally, catalyzes the hydrolysis of N-succinyl-L,L-diaminopimelic acid (SDAP), forming succinate and LL-2,6-diaminopimelate (DAP), an intermediate involved in the bacterial biosynthesis of lysine and meso-diaminopimelic acid, an essential component of bacterial cell walls. This is Succinyl-diaminopimelate desuccinylase from Buchnera aphidicola subsp. Acyrthosiphon pisum (strain APS) (Acyrthosiphon pisum symbiotic bacterium).